The primary structure comprises 389 residues: MTEPLPDVTFPQGFRAAAMAAGIKPSGKPDLSCVVSERDCAWAFAGTRSTTAAACVTRNRELYASGAPLRALVVNAGVANAATGQQGARDNADMADALASVLAVGEAEVITASTGVIGHLLPMDKVLSGVEHLPEELEGAALPFATAIMTTDTRSKLAHVTLSNGARIVGTAKGSGMIHPDMATMFAFAFTDAQVDQGALRGAFPAIVARTFNAVTVDGDTSTNDMTAVLANGAAGETDLTEFLTALEGVMRDLARQIAADGEGATRLLTVRVTGAASEAEALGAARTCCVSPLLKSAVHGADPNWGRVIMAVGRSGAGVKVEAMKVSVQGVPVFAGGPLNYDAAAVSQSMKTDEVIFDVDLGVGSARGEAWGCDLSAEYVSINADYTT.

Positions 150, 173, 184, 263, 384, and 389 each coordinate substrate. Thr184 serves as the catalytic Nucleophile.

Belongs to the ArgJ family. In terms of assembly, heterotetramer of two alpha and two beta chains.

Its subcellular location is the cytoplasm. It carries out the reaction N(2)-acetyl-L-ornithine + L-glutamate = N-acetyl-L-glutamate + L-ornithine. The catalysed reaction is L-glutamate + acetyl-CoA = N-acetyl-L-glutamate + CoA + H(+). The protein operates within amino-acid biosynthesis; L-arginine biosynthesis; L-ornithine and N-acetyl-L-glutamate from L-glutamate and N(2)-acetyl-L-ornithine (cyclic): step 1/1. It functions in the pathway amino-acid biosynthesis; L-arginine biosynthesis; N(2)-acetyl-L-ornithine from L-glutamate: step 1/4. Functionally, catalyzes two activities which are involved in the cyclic version of arginine biosynthesis: the synthesis of N-acetylglutamate from glutamate and acetyl-CoA as the acetyl donor, and of ornithine by transacetylation between N(2)-acetylornithine and glutamate. This chain is Arginine biosynthesis bifunctional protein ArgJ, found in Deinococcus radiodurans (strain ATCC 13939 / DSM 20539 / JCM 16871 / CCUG 27074 / LMG 4051 / NBRC 15346 / NCIMB 9279 / VKM B-1422 / R1).